Consider the following 321-residue polypeptide: Beta-1,3-N-acetylglucosaminyltransferase manic fringe (321 aa).

Residues 1–7 (MQCRLPR) lie on the Cytoplasmic side of the membrane. The chain crosses the membrane as a helical; Signal-anchor for type II membrane protein span at residues 8 to 27 (GLAGALLTLLCMGLLCLRYH). The Lumenal segment spans residues 28-321 (LNLSPQRVQG…TPWCPQLGAR (294 aa)). A substrate-binding site is contributed by arginine 70. The N-linked (GlcNAc...) asparagine glycan is linked to asparagine 109. Intrachain disulfides connect cysteine 110–cysteine 121 and cysteine 139–cysteine 202. Aspartate 143 is a binding site for substrate. Aspartate 144 contributes to the Mn(2+) binding site. Asparagine 185 is a glycosylation site (N-linked (GlcNAc...) asparagine). Residue aspartate 232 is part of the active site. Histidine 256 is a Mn(2+) binding site. Cysteine 306 and cysteine 315 are oxidised to a cystine.

It belongs to the glycosyltransferase 31 family. It depends on Mn(2+) as a cofactor.

The protein resides in the golgi apparatus membrane. The catalysed reaction is 3-O-(alpha-L-fucosyl)-L-threonyl-[EGF-like domain protein] + UDP-N-acetyl-alpha-D-glucosamine = 3-O-(N-acetyl-beta-D-glucosaminyl-(1-&gt;3)-alpha-L-fucosyl)-L-threonyl-[EGF-like domain protein] + UDP + H(+). The enzyme catalyses 3-O-(alpha-L-fucosyl)-L-seryl-[EGF-like domain protein] + UDP-N-acetyl-alpha-D-glucosamine = 3-O-(N-acetyl-beta-D-glucosaminyl-(1-&gt;3)-alpha-L-fucosyl)-L-seryl-[EGF-like domain protein] + UDP + H(+). Its function is as follows. Glycosyltransferase that initiates the elongation of O-linked fucose residues attached to EGF-like repeats in the extracellular domain of Notch molecules. Modulates NOTCH1 activity by modifying O-fucose residues at specific EGF-like domains resulting in inhibition of NOTCH1 activation by JAG1 and enhancement of NOTCH1 activation by DLL1 via an increase in its binding to DLL1. The protein is Beta-1,3-N-acetylglucosaminyltransferase manic fringe of Homo sapiens (Human).